A 963-amino-acid chain; its full sequence is Importin-13 (963 aa).

HEAT repeat units lie at residues 24 to 54 (ENVE…QAQV), 56 to 88 (PQAW…KISR), 95 to 135 (TDQY…LSMM), 142 to 179 (AVAD…EFQT), 194 to 231 (LAVE…SWVQ), 236 to 268 (LQDC…NAIS), 276 to 325 (VNTL…ALLD), 330 to 372 (WQSF…DDIL), 375 to 438 (EAEK…YEML), 440 to 476 (AELL…FQSI), 487 to 522 (VVPG…WLAD), 524 to 558 (PVMI…CREC), 562 to 600 (LPPY…LLSA), 603 to 648 (VEEI…SNLF), 676 to 716 (PVVV…VKTL), 720 to 754 (FAPM…VHIF), 761 to 803 (FPPI…ALKR), 815 to 845 (VKAV…TELL), 860 to 893 (EDGR…FALN), and 897 to 931 (FSLL…QQIL). Residues 45-111 (AQKWLMQAQV…KAQLFTQITR (67 aa)) enclose the Importin N-terminal domain.

Belongs to the importin beta family. Interacts with UBC9, RAN, RBM8A, eIF-1A and PAX6.

Its subcellular location is the cytoplasm. The protein localises to the nucleus. In terms of biological role, functions in nuclear protein import as nuclear transport receptor. Serves as receptor for nuclear localization signals (NLS) in cargo substrates. Is thought to mediate docking of the importin/substrate complex to the nuclear pore complex (NPC) through binding to nucleoporin and the complex is subsequently translocated through the pore by an energy requiring, Ran-dependent mechanism. At the nucleoplasmic side of the NPC, Ran binds to the importin, the importin/substrate complex dissociates and importin is re-exported from the nucleus to the cytoplasm where GTP hydrolysis releases Ran. The directionality of nuclear import is thought to be conferred by an asymmetric distribution of the GTP- and GDP-bound forms of Ran between the cytoplasm and nucleus. Mediates the nuclear import of UBC9, the RBM8A/MAGOH complex, PAX6 and probably other members of the paired homeobox family. Also mediates nuclear export of eIF-1A, and the cytoplasmic release of eIF-1A is triggered by the loading of import substrates onto IPO13. The sequence is that of Importin-13 (Ipo13) from Mus musculus (Mouse).